Consider the following 543-residue polypeptide: Chaperonin GroEL (543 aa).

ATP contacts are provided by residues 29–32 (TLGP), 86–90 (DGTTT), glycine 413, 477–479 (DAL), and aspartate 493.

The protein belongs to the chaperonin (HSP60) family. In terms of assembly, forms a cylinder of 14 subunits composed of two heptameric rings stacked back-to-back. Interacts with the co-chaperonin GroES.

The protein resides in the cytoplasm. The catalysed reaction is ATP + H2O + a folded polypeptide = ADP + phosphate + an unfolded polypeptide.. In terms of biological role, together with its co-chaperonin GroES, plays an essential role in assisting protein folding. The GroEL-GroES system forms a nano-cage that allows encapsulation of the non-native substrate proteins and provides a physical environment optimized to promote and accelerate protein folding. This chain is Chaperonin GroEL, found in Clostridium novyi (strain NT).